Reading from the N-terminus, the 325-residue chain is MKIFDYEDIQLIPNKCIVESRSECDTTIQFGPKKFKLPVVPANMQTVMNEKLAKWFAENDYFYIMHRFDEEARIPFIKHMQNSGLFASISVGVKKAEFDFIEKLAQEKLIPEYITIDIAHGHSDSVINMIKHIKTHIPDSFVIAGNVGTPEGVRELENAGADATKVGIGPGRVCITKIKTGFGTGGWQLAALNICSKAARKPLIADGGIRTHGDIAKSIRFGASMVMIGSLFAAHEESPGETVELDGKQYKEYFGSASEFQKGEHKNVEGKKMFVEHKGSLTDTLKEMQQDLQSSISYAGGKDLKSLRTVDYVIVRNSIFNGDRD.

Catalysis depends on C174, which acts as the Thioimidate intermediate. Residue 203-226 participates in NADP(+) binding; the sequence is LIADGGIRTHGDIAKSIRFGASMV.

It belongs to the IMPDH/GMPR family. GuaC type 2 subfamily.

It carries out the reaction IMP + NH4(+) + NADP(+) = GMP + NADPH + 2 H(+). Catalyzes the irreversible NADPH-dependent deamination of GMP to IMP. It functions in the conversion of nucleobase, nucleoside and nucleotide derivatives of G to A nucleotides, and in maintaining the intracellular balance of A and G nucleotides. The polypeptide is GMP reductase (Staphylococcus aureus (strain MRSA252)).